A 1872-amino-acid polypeptide reads, in one-letter code: Plexin-A3 (1872 aa).

The N-terminal stretch at methionine 1–glycine 19 is a signal peptide. Positions serine 20–valine 489 constitute a Sema domain. Residues serine 20–proline 1220 are Extracellular-facing. N-linked (GlcNAc...) asparagine glycosylation is present at asparagine 60. 9 disulfide bridges follow: cysteine 78/cysteine 87, cysteine 113/cysteine 121, cysteine 267/cysteine 388, cysteine 283/cysteine 339, cysteine 357/cysteine 376, cysteine 492/cysteine 509, cysteine 498/cysteine 540, cysteine 501/cysteine 518, and cysteine 512/cysteine 524. Asparagine 549 is a glycosylation site (N-linked (GlcNAc...) asparagine). Cysteine 575 and cysteine 595 are disulfide-bonded. 4 IPT/TIG domains span residues proline 841–valine 934, proline 936–threonine 1021, proline 1024–tyrosine 1123, and proline 1126–threonine 1212. N-linked (GlcNAc...) asparagine glycosylation occurs at asparagine 1163. A helical transmembrane segment spans residues alanine 1221–valine 1241. Residues leucine 1240–glutamine 1294 adopt a coiled-coil conformation. Topologically, residues alanine 1242–serine 1872 are cytoplasmic. Serine 1597 carries the phosphoserine modification.

Belongs to the plexin family.

It localises to the cell membrane. Functionally, coreceptor for SEMA3A and SEMA3F. Necessary for signaling by class 3 semaphorins and subsequent remodeling of the cytoskeleton. Plays a role in axon guidance in the developing nervous system. Regulates the migration of sympathetic neurons, but not of neural crest precursors. Required for normal dendrite spine morphology in pyramidal neurons. May play a role in regulating semaphorin-mediated programmed cell death in the developing nervous system. Class 3 semaphorins bind to a complex composed of a neuropilin and a plexin. The plexin modulates the affinity of the complex for specific semaphorins, and its cytoplasmic domain is required for the activation of down-stream signaling events in the cytoplasm. The sequence is that of Plexin-A3 (Plxna3) from Rattus norvegicus (Rat).